The chain runs to 321 residues: Phosphoenolpyruvate transferase (321 aa).

Asp51 serves as a coordination point for 7,8-didemethyl-8-hydroxy-5-deazariboflavin.

Belongs to the CofD family. In terms of assembly, homodimer. It depends on Mg(2+) as a cofactor.

The enzyme catalyses enolpyruvoyl-2-diphospho-5'-guanosine + 7,8-didemethyl-8-hydroxy-5-deazariboflavin = dehydro coenzyme F420-0 + GMP + H(+). It functions in the pathway cofactor biosynthesis; coenzyme F420 biosynthesis. In terms of biological role, catalyzes the transfer of the phosphoenolpyruvate moiety from enoylpyruvoyl-2-diphospho-5'-guanosine (EPPG) to 7,8-didemethyl-8-hydroxy-5-deazariboflavin (FO) with the formation of dehydro coenzyme F420-0 and GMP. In Kitasatospora aureofaciens (Streptomyces aureofaciens), this protein is Phosphoenolpyruvate transferase.